The primary structure comprises 352 residues: MKKILFIDRDGTLVEEPFDFQVDSLDKIKLTSGVIPALLQLQKAGFTFIMVSNQNGIGTVAFPEEDFAVCHEFILDLFSSQGILFDEIFICPHTPEDNCICRKPKTGLLESYLKETAFAKQYSWVIGDRDTDKEFADNLGVNFLPISKTHTWEMVASAIINDARKASVQRKTKETAVDLSVQLDSDQTSVIDTPIPFFTHMLEQVAKHGGFDLRLQASGDLEVDEHHLIEDTAIALGEAIRTALGDKWGINRYGYTLPMDESLATIAIDISGRSFCDFKGQFTREFIGGMATEMIPHFFQSLSSALGATIHIEVTGINHHHMIEACFKVLGRALRQACSRTNNYLPSTKGVL.

The segment at 1–163 (MKKILFIDRD…MVASAIINDA (163 aa)) is histidinol-phosphatase. Aspartate 8 acts as the Nucleophile in catalysis. Mg(2+) is bound by residues aspartate 8 and aspartate 10. Aspartate 10 serves as the catalytic Proton donor. Zn(2+) contacts are provided by cysteine 91, histidine 93, cysteine 99, and cysteine 101. Residue aspartate 128 coordinates Mg(2+). An imidazoleglycerol-phosphate dehydratase region spans residues 164–352 (RKASVQRKTK…NYLPSTKGVL (189 aa)).

In the N-terminal section; belongs to the histidinol-phosphatase family. The protein in the C-terminal section; belongs to the imidazoleglycerol-phosphate dehydratase family. It depends on Mg(2+) as a cofactor. Requires Zn(2+) as cofactor.

It localises to the cytoplasm. It catalyses the reaction D-erythro-1-(imidazol-4-yl)glycerol 3-phosphate = 3-(imidazol-4-yl)-2-oxopropyl phosphate + H2O. It carries out the reaction L-histidinol phosphate + H2O = L-histidinol + phosphate. The protein operates within amino-acid biosynthesis; L-histidine biosynthesis; L-histidine from 5-phospho-alpha-D-ribose 1-diphosphate: step 6/9. Its pathway is amino-acid biosynthesis; L-histidine biosynthesis; L-histidine from 5-phospho-alpha-D-ribose 1-diphosphate: step 8/9. The chain is Histidine biosynthesis bifunctional protein HisB from Legionella pneumophila (strain Lens).